The chain runs to 347 residues: L-threonine 3-dehydrogenase (347 aa).

Cys-42 is a Zn(2+) binding site. Active-site charge relay system residues include Thr-44 and His-47. Zn(2+) is bound by residues His-67, Glu-68, Cys-97, Cys-100, Cys-103, and Cys-111. NAD(+)-binding positions include Ile-180, Asp-200, Arg-205, Leu-267 to Leu-269, and Ile-292 to Thr-293.

The protein belongs to the zinc-containing alcohol dehydrogenase family. As to quaternary structure, homotetramer. Zn(2+) serves as cofactor.

It localises to the cytoplasm. The catalysed reaction is L-threonine + NAD(+) = (2S)-2-amino-3-oxobutanoate + NADH + H(+). Its pathway is amino-acid degradation; L-threonine degradation via oxydo-reductase pathway; glycine from L-threonine: step 1/2. Its function is as follows. Catalyzes the NAD(+)-dependent oxidation of L-threonine to 2-amino-3-ketobutyrate. The sequence is that of L-threonine 3-dehydrogenase from Bacillus velezensis (strain DSM 23117 / BGSC 10A6 / LMG 26770 / FZB42) (Bacillus amyloliquefaciens subsp. plantarum).